The sequence spans 405 residues: GTPase Obg (405 aa).

One can recognise an Obg domain in the interval 1–159 (MKFVDEVSIF…RDLKLELKVL (159 aa)). The disordered stretch occupies residues 127–148 (NTRFKSSTNRAPRQTTPGKPGE). The segment covering 129-143 (RFKSSTNRAPRQTTP) has biased composition (polar residues). The OBG-type G domain occupies 160–333 (ADVGLLGLPN…LCQDIMHYLD (174 aa)). GTP is bound by residues 166–173 (GLPNAGKS), 191–195 (FTTLV), 213–216 (DIPG), 283–286 (NKAD), and 314–316 (SAL). Mg(2+)-binding residues include serine 173 and threonine 193. Acidic residues predominate over residues 383–398 (ALEDEDDFDDEDDGDG). Residues 383 to 405 (ALEDEDDFDDEDDGDGPEIFYVR) form a disordered region.

It belongs to the TRAFAC class OBG-HflX-like GTPase superfamily. OBG GTPase family. In terms of assembly, monomer. Mg(2+) serves as cofactor.

It localises to the cytoplasm. Its function is as follows. An essential GTPase which binds GTP, GDP and possibly (p)ppGpp with moderate affinity, with high nucleotide exchange rates and a fairly low GTP hydrolysis rate. Plays a role in control of the cell cycle, stress response, ribosome biogenesis and in those bacteria that undergo differentiation, in morphogenesis control. This is GTPase Obg from Azotobacter vinelandii (strain DJ / ATCC BAA-1303).